The following is a 582-amino-acid chain: Formate--tetrahydrofolate ligase (582 aa).

65-72 (TPLGEGKT) is an ATP binding site.

It belongs to the formate--tetrahydrofolate ligase family.

It carries out the reaction (6S)-5,6,7,8-tetrahydrofolate + formate + ATP = (6R)-10-formyltetrahydrofolate + ADP + phosphate. Its pathway is one-carbon metabolism; tetrahydrofolate interconversion. This is Formate--tetrahydrofolate ligase from Aliivibrio fischeri (strain ATCC 700601 / ES114) (Vibrio fischeri).